The primary structure comprises 817 residues: Trehalose-phosphatase (817 aa).

The tract at residues 1-547 (MSVYGKIPST…LAATKTDQRI (547 aa)) is glycosyltransferase.

The protein in the N-terminal section; belongs to the glycosyltransferase 20 family. This sequence in the C-terminal section; belongs to the trehalose phosphatase family. As to quaternary structure, component of the trehalose synthase complex that contains at least tps1, ntp1, and tpp1. Interacts with tps1. Interacts with ntp1. Mg(2+) serves as cofactor.

It carries out the reaction alpha,alpha-trehalose 6-phosphate + H2O = alpha,alpha-trehalose + phosphate. Its pathway is carbohydrate biosynthesis. Functionally, phosphatase catalytic subunit of the trehalose synthase complex that catalyzes the production of trehalose from glucose-6-phosphate and UDP-alpha-D-glucose in a two step process. The disaccharide trehalose serves as a storage carbohydrate that is mobilized during nutrient stress and spore germination. Together with ntp1, regulates the level of trehalose as a protectant for cell integrity during thermal, osmotic, and oxidative stress. The sequence is that of Trehalose-phosphatase from Schizosaccharomyces pombe (strain 972 / ATCC 24843) (Fission yeast).